Reading from the N-terminus, the 737-residue chain is Relaxin receptor 2 (737 aa).

Over 1–399 the chain is Extracellular; sequence MWLLLHVILL…SSSEDLLANG (399 aa). The LDL-receptor class A domain occupies 27–64; sequence LCPKGYFPCGNLTKCLPRAFHCDGVDDCGNGADEDNCG. 3 cysteine pairs are disulfide-bonded: Cys28-Cys41, Cys35-Cys54, and Cys48-Cys63. Asn37 carries N-linked (GlcNAc...) asparagine glycosylation. Residue Asn121 is glycosylated (N-linked (GlcNAc...) asparagine). 10 LRR repeats span residues 121–142, 145–166, 169–190, 193–214, 217–238, 241–262, 265–286, 289–310, 313–334, and 337–358; these read NVTLLSLKKNKIHRLPVKVFSR, ELRKIYLQHNCITHISRRAFLG, NLQILYLSHNCITSLRPGIFKD, QLAWLILDDNPITRISQKSFMG, SLFFLSMVGNRLEALPETLCAQ, QLNWVDLANNGIKYITNSTFLT, SLTVLFLPRNQIGFVPEKTFSS, NLGELDLSSNMITKLPVHLFSD, LLQKLNLSSNPLLYVHKNQFGS, and QLQSLDLERIEIPNISTGMFQP. Residue Asn257 is glycosylated (N-linked (GlcNAc...) asparagine). Asn318, Asn350, and Asn361 each carry an N-linked (GlcNAc...) asparagine glycan. Residues 400 to 420 form a helical membrane-spanning segment; sequence ILRVSVWVIAFITCVGNFLVI. The Cytoplasmic segment spans residues 421 to 438; it reads AVRSLIKAENTTHAMSIK. Residues 439 to 459 form a helical membrane-spanning segment; sequence ILCCADCLMGVYLFSVGVFDI. Residues 460–478 are Extracellular-facing; the sequence is KYRGQYQKYALLWMESVPC. A disulfide bridge links Cys478 with Cys556. A helical membrane pass occupies residues 479–501; that stretch reads RLLGFLATLSTEVSVLLLTFLTL. Topologically, residues 502 to 520 are cytoplasmic; sequence EKFLVIVFPFSNLRLGKRQ. The chain crosses the membrane as a helical span at residues 521–541; sequence TAVALASIWVVGFLIAAVPFT. Topologically, residues 542-575 are extracellular; that stretch reads REDYFGNFYGKNGVCFPLHYDQAEDFGSRGYSLG. The helical transmembrane segment at 576–596 threads the bilayer; that stretch reads IFLGVNLLAFLVIVISYVTMF. Topologically, residues 597–622 are cytoplasmic; sequence CSIHKTALQTAEVRSHIGKEVAVANR. The chain crosses the membrane as a helical span at residues 623-643; it reads FFFIVFSDAICWIPVFVVKIL. The Extracellular portion of the chain corresponds to 644 to 653; the sequence is SLLQVEIPGT. Residues 654–674 form a helical membrane-spanning segment; sequence ITSWIVVFFLPVNSALNPILY. Topologically, residues 675-737 are cytoplasmic; it reads TLTTSFFKDK…GDSIMKPVSP (63 aa).

The protein belongs to the G-protein coupled receptor 1 family. In terms of tissue distribution, expressed in embryonic and adult gonads of males and females, as well in male gubernarculum. Expressed also in brain. Not detected in kidney, spleen and heart.

The protein resides in the cell membrane. Receptor for relaxin. The activity of this receptor is mediated by G proteins leading to stimulation of adenylate cyclase and an increase of cAMP. May also be a receptor for Leydig insulin-like peptide (INSL3). The sequence is that of Relaxin receptor 2 (Rxfp2) from Mus musculus (Mouse).